A 277-amino-acid polypeptide reads, in one-letter code: 3-methyl-2-oxobutanoate hydroxymethyltransferase (277 aa).

Residues aspartate 43 and aspartate 82 each coordinate Mg(2+). 3-methyl-2-oxobutanoate contacts are provided by residues aspartate 43–serine 44, aspartate 82, and lysine 112. Glutamate 114 serves as a coordination point for Mg(2+). Glutamate 181 serves as the catalytic Proton acceptor.

The protein belongs to the PanB family. In terms of assembly, homodecamer; pentamer of dimers. It depends on Mg(2+) as a cofactor.

It localises to the cytoplasm. It carries out the reaction 3-methyl-2-oxobutanoate + (6R)-5,10-methylene-5,6,7,8-tetrahydrofolate + H2O = 2-dehydropantoate + (6S)-5,6,7,8-tetrahydrofolate. It functions in the pathway cofactor biosynthesis; (R)-pantothenate biosynthesis; (R)-pantoate from 3-methyl-2-oxobutanoate: step 1/2. Catalyzes the reversible reaction in which hydroxymethyl group from 5,10-methylenetetrahydrofolate is transferred onto alpha-ketoisovalerate to form ketopantoate. The polypeptide is 3-methyl-2-oxobutanoate hydroxymethyltransferase (Listeria monocytogenes serovar 1/2a (strain ATCC BAA-679 / EGD-e)).